Consider the following 396-residue polypeptide: Acetylornithine aminotransferase 2 (396 aa).

Pyridoxal 5'-phosphate-binding positions include 102 to 103 (GA) and Phe134. A N(2)-acetyl-L-ornithine-binding site is contributed by Arg137. 219 to 222 (DEVQ) is a pyridoxal 5'-phosphate binding site. Lys248 is subject to N6-(pyridoxal phosphate)lysine. Position 276 (Thr276) interacts with pyridoxal 5'-phosphate.

It belongs to the class-III pyridoxal-phosphate-dependent aminotransferase family. ArgD subfamily. Homodimer. It depends on pyridoxal 5'-phosphate as a cofactor.

Its subcellular location is the cytoplasm. It carries out the reaction N(2)-acetyl-L-ornithine + 2-oxoglutarate = N-acetyl-L-glutamate 5-semialdehyde + L-glutamate. It participates in amino-acid biosynthesis; L-arginine biosynthesis; N(2)-acetyl-L-ornithine from L-glutamate: step 4/4. The polypeptide is Acetylornithine aminotransferase 2 (Bordetella pertussis (strain Tohama I / ATCC BAA-589 / NCTC 13251)).